The chain runs to 140 residues: Peptide methionine sulfoxide reductase MsrB (140 aa).

In terms of domain architecture, MsrB spans 10 to 132 (EEDWKSVLTP…NSVSLGFTKE (123 aa)). The Zn(2+) site is built by C49, C52, C98, and C101. C121 functions as the Nucleophile in the catalytic mechanism.

This sequence belongs to the MsrB Met sulfoxide reductase family. Zn(2+) serves as cofactor.

It catalyses the reaction L-methionyl-[protein] + [thioredoxin]-disulfide + H2O = L-methionyl-(R)-S-oxide-[protein] + [thioredoxin]-dithiol. This is Peptide methionine sulfoxide reductase MsrB from Methanosarcina mazei (strain ATCC BAA-159 / DSM 3647 / Goe1 / Go1 / JCM 11833 / OCM 88) (Methanosarcina frisia).